The following is a 388-amino-acid chain: Succinate--CoA ligase [ADP-forming] subunit beta (388 aa).

One can recognise an ATP-grasp domain in the interval 9-244 (KQLFAEYGLP…PSQDDPREAH (236 aa)). Residues Lys-46, 53 to 55 (GRG), Glu-99, Thr-102, and Glu-107 contribute to the ATP site. Mg(2+)-binding residues include Asn-199 and Asp-213. Substrate contacts are provided by residues Asn-264 and 321 to 323 (GIV).

This sequence belongs to the succinate/malate CoA ligase beta subunit family. As to quaternary structure, heterotetramer of two alpha and two beta subunits. It depends on Mg(2+) as a cofactor.

It carries out the reaction succinate + ATP + CoA = succinyl-CoA + ADP + phosphate. The catalysed reaction is GTP + succinate + CoA = succinyl-CoA + GDP + phosphate. It functions in the pathway carbohydrate metabolism; tricarboxylic acid cycle; succinate from succinyl-CoA (ligase route): step 1/1. Succinyl-CoA synthetase functions in the citric acid cycle (TCA), coupling the hydrolysis of succinyl-CoA to the synthesis of either ATP or GTP and thus represents the only step of substrate-level phosphorylation in the TCA. The beta subunit provides nucleotide specificity of the enzyme and binds the substrate succinate, while the binding sites for coenzyme A and phosphate are found in the alpha subunit. The protein is Succinate--CoA ligase [ADP-forming] subunit beta of Pseudomonas syringae pv. tomato (strain ATCC BAA-871 / DC3000).